Here is a 274-residue protein sequence, read N- to C-terminus: Thiamine kinase (274 aa).

Belongs to the thiamine kinase family.

The catalysed reaction is thiamine + ATP = thiamine phosphate + ADP + H(+). It participates in cofactor biosynthesis; thiamine diphosphate biosynthesis; thiamine phosphate from thiamine: step 1/1. Functionally, catalyzes the ATP-dependent phosphorylation of thiamine to thiamine phosphate. Is involved in thiamine salvage. This chain is Thiamine kinase, found in Salmonella paratyphi A (strain ATCC 9150 / SARB42).